A 486-amino-acid polypeptide reads, in one-letter code: MKITDLAGSNFPELSAQLKGDAATIEIGGITADSRQVKPGDLFVAVAGSKADGAAYIADALSRGASAVVAGTGTPAEAGAPVFAISDPRRFLAKAASSFYGRQPETMVAVTGTAGKTSVASFTRQIWAHSGFSAAMIGTTGVVAPGRTEYGSLTTPDPVSLHKLLAELADEGVTHAAMEASSHGLDQRRLDGVELAAAAFTNLGRDHMDYHPTVEHYMASKMRLFGALLPKGSPAVIFADDQWSAEAIAAARKAGHDVRTVGRNGDFIALKRVEHFRHKQSAEVHVGDDIYEIHVPLAGDFQIANALVAAGLAMSTGITAKAAFSALERLQGASGRLELVGQTKDGALAYVDYAHKPDALANVLESVRPFTTGRVVVVFGCGGDRDKGKRPIMGEIASRLADVVIVTDDNPRSEVPEVIRAEIMAAAKGATEIGDRAEAIRAAVGMLKTGDTLIVAGKGHEEGQTVGSVTLPFSDHAEVRKALGGL.

S34 lines the UDP-N-acetyl-alpha-D-muramoyl-L-alanyl-D-glutamate pocket. Position 112–118 (112–118 (GTAGKTS)) interacts with ATP. Residues 154–155 (TT), S181, Q187, and R189 contribute to the UDP-N-acetyl-alpha-D-muramoyl-L-alanyl-D-glutamate site. Position 221 is an N6-carboxylysine (K221). Meso-2,6-diaminopimelate is bound by residues R385, 409 to 412 (DNPR), G457, and E461. The Meso-diaminopimelate recognition motif motif lies at 409-412 (DNPR).

Belongs to the MurCDEF family. MurE subfamily. Requires Mg(2+) as cofactor. In terms of processing, carboxylation is probably crucial for Mg(2+) binding and, consequently, for the gamma-phosphate positioning of ATP.

It is found in the cytoplasm. The catalysed reaction is UDP-N-acetyl-alpha-D-muramoyl-L-alanyl-D-glutamate + meso-2,6-diaminopimelate + ATP = UDP-N-acetyl-alpha-D-muramoyl-L-alanyl-gamma-D-glutamyl-meso-2,6-diaminopimelate + ADP + phosphate + H(+). Its pathway is cell wall biogenesis; peptidoglycan biosynthesis. Its function is as follows. Catalyzes the addition of meso-diaminopimelic acid to the nucleotide precursor UDP-N-acetylmuramoyl-L-alanyl-D-glutamate (UMAG) in the biosynthesis of bacterial cell-wall peptidoglycan. This chain is UDP-N-acetylmuramoyl-L-alanyl-D-glutamate--2,6-diaminopimelate ligase, found in Rhizobium meliloti (strain 1021) (Ensifer meliloti).